The sequence spans 167 residues: Envelope glycoprotein L (167 aa).

A signal peptide spans 1–20 (MGIFALFAVLWTTLLVTSHA). The tract at residues 18–131 (SHAYVALPCC…ADSSIHNVNI (114 aa)) is interaction with gH. Residues 142-154 (RTGSVSGSQTRAK) are compositionally biased toward polar residues. The tract at residues 142 to 167 (RTGSVSGSQTRAKSSSRRAHAGQKGK) is disordered. Over residues 155–167 (SSSRRAHAGQKGK) the composition is skewed to basic residues.

It belongs to the herpesviridae glycoprotein L family. Interacts with glycoprotein H (gH); this interaction is necessary for the correct processing and cell surface expression of gH. The heterodimer gH/gL seems to interact with gB trimers during fusion. When in complex with gH, interacts with host EPHA2; this interaction triggers EPHA2 phosphorylation and endocytosis, allowing virus entry.

It localises to the virion membrane. The protein localises to the host cell membrane. The protein resides in the host Golgi apparatus. Its subcellular location is the host trans-Golgi network. Its function is as follows. The heterodimer glycoprotein H-glycoprotein L is required for the fusion of viral and plasma membranes leading to virus entry into the host cell. Acts as a functional inhibitor of gH and maintains gH in an inhibited form. Upon binding to host integrins, gL dissociates from gH leading to activation of the viral fusion glycoproteins gB and gH. Targets heparan sulfate proteoglycans of the syndecan family as well as host EPHA2 to promote viral entry. This Human herpesvirus 8 type P (isolate GK18) (HHV-8) protein is Envelope glycoprotein L.